The following is a 1415-amino-acid chain: DNA-directed RNA polymerase subunit beta' (1415 aa).

Positions 71, 73, 86, and 89 each coordinate Zn(2+). Mg(2+) is bound by residues Asp-461, Asp-463, and Asp-465. The Zn(2+) site is built by Cys-815, Cys-889, Cys-896, and Cys-899.

Belongs to the RNA polymerase beta' chain family. In terms of assembly, the RNAP catalytic core consists of 2 alpha, 1 beta, 1 beta' and 1 omega subunit. When a sigma factor is associated with the core the holoenzyme is formed, which can initiate transcription. Requires Mg(2+) as cofactor. Zn(2+) serves as cofactor.

It carries out the reaction RNA(n) + a ribonucleoside 5'-triphosphate = RNA(n+1) + diphosphate. Its function is as follows. DNA-dependent RNA polymerase catalyzes the transcription of DNA into RNA using the four ribonucleoside triphosphates as substrates. This chain is DNA-directed RNA polymerase subunit beta', found in Haemophilus influenzae (strain ATCC 51907 / DSM 11121 / KW20 / Rd).